The primary structure comprises 251 residues: Triosephosphate isomerase (251 aa).

Residue 9-11 coordinates substrate; the sequence is NWK. His95 acts as the Electrophile in catalysis. Catalysis depends on Glu167, which acts as the Proton acceptor. Residues Gly173, Ser212, and 233 to 234 each bind substrate; that span reads GG.

Belongs to the triosephosphate isomerase family. Homodimer.

It localises to the cytoplasm. The catalysed reaction is D-glyceraldehyde 3-phosphate = dihydroxyacetone phosphate. Its pathway is carbohydrate biosynthesis; gluconeogenesis. It functions in the pathway carbohydrate degradation; glycolysis; D-glyceraldehyde 3-phosphate from glycerone phosphate: step 1/1. In terms of biological role, involved in the gluconeogenesis. Catalyzes stereospecifically the conversion of dihydroxyacetone phosphate (DHAP) to D-glyceraldehyde-3-phosphate (G3P). The protein is Triosephosphate isomerase of Pseudomonas syringae pv. syringae (strain B728a).